A 901-amino-acid polypeptide reads, in one-letter code: Aconitate hydratase A (901 aa).

[4Fe-4S] cluster contacts are provided by C443, C509, and C512.

The protein belongs to the aconitase/IPM isomerase family. Monomer. [4Fe-4S] cluster is required as a cofactor.

It carries out the reaction citrate = D-threo-isocitrate. The enzyme catalyses (2S,3R)-3-hydroxybutane-1,2,3-tricarboxylate = 2-methyl-cis-aconitate + H2O. It functions in the pathway carbohydrate metabolism; tricarboxylic acid cycle; isocitrate from oxaloacetate: step 2/2. It participates in organic acid metabolism; propanoate degradation. Its function is as follows. Involved in the catabolism of short chain fatty acids (SCFA) via the tricarboxylic acid (TCA)(acetyl degradation route) and probably the 2-methylcitrate cycle I (propionate degradation route). Catalyzes the reversible isomerization of citrate to isocitrate via cis-aconitate. Could catalyze the hydration of 2-methyl-cis-aconitate to yield (2R,3S)-2-methylisocitrate. The apo form of AcnA functions as a RNA-binding regulatory protein. This is Aconitate hydratase A (acnA) from Staphylococcus epidermidis (strain ATCC 12228 / FDA PCI 1200).